The chain runs to 398 residues: Phosphoglycerate kinase (398 aa).

Substrate-binding positions include 21-23, R36, 59-62, R117, and R150; these read DFN and HFGR. ATP-binding positions include K200, E321, and 351–354; that span reads GGDS.

It belongs to the phosphoglycerate kinase family. In terms of assembly, monomer.

The protein resides in the cytoplasm. It catalyses the reaction (2R)-3-phosphoglycerate + ATP = (2R)-3-phospho-glyceroyl phosphate + ADP. It functions in the pathway carbohydrate degradation; glycolysis; pyruvate from D-glyceraldehyde 3-phosphate: step 2/5. In Wolbachia pipientis wMel, this protein is Phosphoglycerate kinase.